The primary structure comprises 449 residues: Glucose-6-phosphate isomerase (449 aa).

Glu-291 acts as the Proton donor in catalysis. Catalysis depends on residues His-312 and Lys-426.

Belongs to the GPI family.

The protein resides in the cytoplasm. It catalyses the reaction alpha-D-glucose 6-phosphate = beta-D-fructose 6-phosphate. The protein operates within carbohydrate biosynthesis; gluconeogenesis. It functions in the pathway carbohydrate degradation; glycolysis; D-glyceraldehyde 3-phosphate and glycerone phosphate from D-glucose: step 2/4. In terms of biological role, catalyzes the reversible isomerization of glucose-6-phosphate to fructose-6-phosphate. This is Glucose-6-phosphate isomerase from Clostridium botulinum (strain Eklund 17B / Type B).